A 443-amino-acid chain; its full sequence is Putative cytochrome bd menaquinol oxidase subunit I (443 aa).

Transmembrane regions (helical) follow at residues 19–39 (IIFA…ELIY), 60–80 (VLLG…ALLW), 93–113 (LPFQ…SIYV), 125–145 (IVAV…ITNV), 176–196 (FFIT…FIVA), 219–239 (ALLL…LNGH), 322–342 (LFNA…IGVV), 357–377 (LIIF…GWIF), and 405–425 (VLFL…VYVL). H182 serves as a coordination point for heme b.

Belongs to the cytochrome ubiquinol oxidase subunit 1 family. The cofactor is heme b.

The protein resides in the cell membrane. May have a role in sporulation. Can compensate for the loss of cytochrome aa3. The sequence is that of Putative cytochrome bd menaquinol oxidase subunit I (ythA) from Bacillus subtilis (strain 168).